Consider the following 630-residue polypeptide: Transposase B from transposon Tn554 (630 aa).

In terms of domain architecture, Core-binding (CB) spans 216-302 (TYFKQLVKRY…ILEGLFSTLL (87 aa)). The Tyr recombinase domain maps to 326–513 (AKPRFIDEFV…FDETLKNEFT (188 aa)). Active-site residues include Arg-363, Lys-391, His-465, Arg-468, and His-491. Residue Tyr-500 is the O-(3'-phospho-DNA)-tyrosine intermediate of the active site.

This sequence belongs to the 'phage' integrase family.

In terms of biological role, one of three proteins encoded by transposon Tn554 required for its transposition. The protein is Transposase B from transposon Tn554 (tnpB1) of Staphylococcus aureus (strain Mu50 / ATCC 700699).